The following is a 123-amino-acid chain: MKKSGLLNPDLCYAIARLGHTDTWAVADCGLPIPEHVEIIDLALVFGIPTFEQVLNALKPEVVVEGAVIAEGAPERIREMVDTDVEVVTHEELKAQLAECAFVIRTGETTAYANVIFKSGVAF.

The active-site Proton donor is the His20. Residues Asp28, His90, and 112-114 contribute to the substrate site; that span reads YAN.

It belongs to the RbsD / FucU family. RbsD subfamily. As to quaternary structure, homodecamer.

The protein localises to the cytoplasm. It catalyses the reaction beta-D-ribopyranose = beta-D-ribofuranose. The protein operates within carbohydrate metabolism; D-ribose degradation; D-ribose 5-phosphate from beta-D-ribopyranose: step 1/2. Its function is as follows. Catalyzes the interconversion of beta-pyran and beta-furan forms of D-ribose. The sequence is that of D-ribose pyranase from Corynebacterium glutamicum (strain ATCC 13032 / DSM 20300 / JCM 1318 / BCRC 11384 / CCUG 27702 / LMG 3730 / NBRC 12168 / NCIMB 10025 / NRRL B-2784 / 534).